A 295-amino-acid polypeptide reads, in one-letter code: SPX domain-containing protein 1 (295 aa).

Residues 1 to 166 (MKFGKSLSSQ…GALIRLPFIQ (166 aa)) form the SPX domain. Residues 197–227 (NELPVSSEDGRGDSTNEDKPSNPSSSLVNGG) are disordered. The span at 204–216 (EDGRGDSTNEDKP) shows a compositional bias: basic and acidic residues.

As to quaternary structure, interacts (via SPX domain) with PHR2 (via C-terminus). Interacts with RLI1 in the nucleus to prevents its positive regulation of leaf inclination during phosphate (Pi) starvation.

The protein resides in the nucleus. Involved in plant adaptation to phosphate (Pi) starvation. Inhibits PHR2 DNA-binding activity via a Pi-dependent protein interaction. Suppresses the regulation on expression of PT2 by PHR2 and accumulation of shoot Pi. Optimizes growth under phosphate-limited conditions through a negative feedback loop of the PSI (phosphate starvation-induced) signaling pathway. Regulates the expression of SPX2, SPX3 and SPX5. May be an important link between signal transduction pathways related to phosphate starvation and cold stress. Together with SPX2, plays a negative role in the regulation of leaf inclination by preventing RLI1 transcription factor activity in Pi depleted conditions. The polypeptide is SPX domain-containing protein 1 (Oryza sativa subsp. indica (Rice)).